The chain runs to 391 residues: Chorismate synthase (391 aa).

Position 48 (Arg-48) interacts with NADP(+). Residues 126–128 (RAS), Gly-286, 301–305 (KPTSS), and Arg-328 each bind FMN.

The protein belongs to the chorismate synthase family. FMNH2 is required as a cofactor.

It catalyses the reaction 5-O-(1-carboxyvinyl)-3-phosphoshikimate = chorismate + phosphate. The protein operates within metabolic intermediate biosynthesis; chorismate biosynthesis; chorismate from D-erythrose 4-phosphate and phosphoenolpyruvate: step 7/7. Catalyzes the anti-1,4-elimination of the C-3 phosphate and the C-6 proR hydrogen from 5-enolpyruvylshikimate-3-phosphate (EPSP) to yield chorismate, which is the branch point compound that serves as the starting substrate for the three terminal pathways of aromatic amino acid biosynthesis. This reaction introduces a second double bond into the aromatic ring system. In Saccharolobus islandicus (strain L.S.2.15 / Lassen #1) (Sulfolobus islandicus), this protein is Chorismate synthase.